The primary structure comprises 1469 residues: Accumulation-associated protein (1469 aa).

Residues 1–52 form the signal peptide; the sequence is MGKRRQGPINKKVDFLPNKLNKYSIRKFTVGTASILLGSTLIFGSSSHEAKA. Disordered stretches follow at residues 52–164, 486–511, and 528–1443; these read AAEE…SEPV, GIET…TPTT, and EIKP…QANE. 2 stretches are compositionally biased toward polar residues: residues 75-94 and 110-125; these read ENTN…STLQ and KANS…SEAP. Positions 129 to 144 are enriched in basic and acidic residues; it reads DLARKEDIPAVSKNEE. Over residues 145-164 the composition is skewed to polar residues; sequence LQSSQPNTDSKIEPTTSEPV. G5 domains lie at 446-528, 574-656, 702-784, 830-912, 958-1040, 1086-1168, and 1211-1296; these read PKAV…GGEE, YGPV…GGEE, YGPV…GGEQ, and VTKY…GPTK. Residues 489 to 500 show a composition bias toward low complexity; it reads TTTTPTYVNPNT. Basic and acidic residues-rich tracts occupy residues 528–537 and 589–613; these read EIKPGHKDEF and PFDK…KGEP. Positions 614–629 are enriched in low complexity; that stretch reads GTKTITTPTTKNPLTG. Composition is skewed to basic and acidic residues over residues 631–646 and 655–665; these read KVGE…KQPV and EEIKPGHKDEF. Over residues 738 to 757 the composition is skewed to low complexity; sequence KGEPGTKTITTPTTKNPLTG. 2 stretches are compositionally biased toward basic and acidic residues: residues 759-793 and 845-869; these read KVGE…KDEF and PFDK…KGEP. The segment covering 870–885 has biased composition (low complexity); the sequence is GTKTITTPTTKNPLTG. The segment covering 887–921 has biased composition (basic and acidic residues); the sequence is KVGEGEPTEKVTKQPVDEIVHYGGEEIKPGHKDEF. The segment covering 994 to 1013 has biased composition (low complexity); that stretch reads KGEPGTKTITTPTTKNPLTG. Positions 1015 to 1049 are enriched in basic and acidic residues; the sequence is KVGEGEPTEKITKQPVDEIVHYGGEEIKPGHKDEF. Residues 1122–1141 are compositionally biased toward low complexity; it reads KGEPGTKTITTPTTKNPLTG. Composition is skewed to basic and acidic residues over residues 1143–1162, 1229–1253, and 1271–1286; these read KVGE…DEIV, PFDK…KGEP, and KVGE…KQPV. A compositionally biased stretch (polar residues) spans 1409 to 1443; that stretch reads TPTQSGAPEQPNRSMHSTDNKNQLPDTGENRQANE. Residues 1432-1436 carry the LPXTG sorting signal motif; that stretch reads LPDTG. Thr1435 is modified (pentaglycyl murein peptidoglycan amidated threonine). Residues 1436–1469 constitute a propeptide, removed by sortase; the sequence is GENRQANEGTLVGSLLAIVGSLFIFGRRKKGNEK.

The protein localises to the secreted. It localises to the cell wall. The chain is Accumulation-associated protein from Staphylococcus epidermidis (strain ATCC 12228 / FDA PCI 1200).